A 944-amino-acid polypeptide reads, in one-letter code: Valine--tRNA ligase (944 aa).

The 'HIGH' region motif lies at 43-53 (PNVTGTLHMGH). The 'KMSKS' region motif lies at 550–554 (KMSKS). Lys553 is an ATP binding site. Positions 878–944 (LVDMDAERTR…TGLREQRAKL (67 aa)) form a coiled coil.

Belongs to the class-I aminoacyl-tRNA synthetase family. ValS type 1 subfamily. Monomer.

The protein resides in the cytoplasm. The enzyme catalyses tRNA(Val) + L-valine + ATP = L-valyl-tRNA(Val) + AMP + diphosphate. Catalyzes the attachment of valine to tRNA(Val). As ValRS can inadvertently accommodate and process structurally similar amino acids such as threonine, to avoid such errors, it has a 'posttransfer' editing activity that hydrolyzes mischarged Thr-tRNA(Val) in a tRNA-dependent manner. In Xanthomonas campestris pv. campestris (strain 8004), this protein is Valine--tRNA ligase.